Reading from the N-terminus, the 1591-residue chain is MIPHSSAGVQPWGHPLRAVHSASGLTDIPHALGQPDLHPEQSSMPAPQPQTGPSAVIDLTANGGEAQEREHPAKRLRLDIHSGSNARDGSPASAGLGEPKSTPVSTSSKPPPLSWRGRPVWSFQALLSEVPGAGEPNVESTTAAAQDVKPLSPPSFPAPPWKHSPADPTASSAAGLRGVTPAKEVRTTPYHIEVPSVAPVLRGDKVADFLPWTGNHPEDVLNEQTAKQGYYDRTQVSQNESNTARPSLYAQLKHRSGLQMLSSVFAAALEKRQGHSMVTAPSTFKPPPRVTLTDNKREAWLRDLANPTVPLRRLSRTIPHGIRGRVLLDQCLTKWVPVGRAVWLAKCVGANEIRAFKRKGTSGALAIGLEAKWVRDWTTNVQQFLDGVITSCGVADWKLKMTYAVSLTARLFFEQLLDHDQYLGWFLSSLEAAPLNTLPVWLLMLGIYWNHLLRYRKRGRRLAELLLEKLSKANKLDSSNTLRPLADRLSLHIRKLTLEHTSSAVLPHSWDKYKDLLSSCLNMKDSVHRAVIQNLSERNARVQRPRKCQETANQPPQQRVIQLFDSIRSTHDVTAVSIASLSAIDDKAALVFKLLEWVSTPFRHGICRVYTGARLLRKWKVAGVDVDSCIISFLAEGHDGSHLNMDNIYHIISELVRSQTFSVGRYLQWLMAKGVADCSKDSHQHHKHLSDDLELLLQLPVSRLPDHVRNLRNTLLHRAGIEVSKEEAMIATLKASIAQRLPNIFSSVTDSAMSCDVAQSELTWAVKSEIGQWIRRGVTEGRRGSTGKFQIAIGQPVLSADEFYSIRDILEGFGDLSMLADVLNQATNCDDGLILASAADTVNYHFQSFSVIGASTGLFRRFVESYARLKRLGVTSLDLILSLIDLGLHLPGEFNTVALLRQDLGRIENKSSMAAPSPLSDHIPATFNETDSLFPEKLDQLLFSGGGMDESTMDAIFNALITSLGRAEDRVKLSANDICRYLAYLRPFHPKHFDIMLIRWICGLLKSSTRTMLSRVLPPLIGVGCVTIQAFIFLVRRLLQSEKVASMIPHPNDLKIDLLQLLVPPPAGQSRYFDMVTYRFHLSQKEFLSKHPEETFNIIRDAIALIDSQDQDNHSDQGQMNLNQNAMVLLQILLTKNPESAVQYCTEKLITQHSTSMMVLTKALDTLLGFDTGPDPPNVSVAEKVIELTNDFSLPFCQLKLQTLFNAEAGSNVKNEIVDVMFKAAIADSRSRRSNWVGLVRLMNQDAVRQIRERAEKSFFAIPLFEEANEGRSMNNGTSLETAKLYLTIIEKLAYSIPDSGVQGVGSVLVEKMDLLLHKLVSMQTSYNGSTEMRHGIDAEQVIQSRTEFERSLAFWFSALLRMIVLHRSAFSIPPAPKSSASQEQTRLLISIFCITLARLPDSVLRLFPTADYFPHSMRQGDHRPCPGILLQTHALDVAASLIDMFPDELRHQCARFLKDKCSPFAQSQNDSRFLYLLGPLGDGPTSNATLPVSIPSPAASGSTPAPTPSGSLTAGPSNPPQPASASLGVPTGLPEGLNCGASHLCLQYRGRAIGAYPVRPWELLEDAAPIAGTNDTAVSLGYFDARRVRA.

Disordered stretches follow at residues 1–116 (MIPH…LSWR), 132–176 (GAGE…AAGL), and 1488–1530 (NATL…SLGV). Residues 40-53 (EQSSMPAPQPQTGP) are compositionally biased toward polar residues. A compositionally biased stretch (basic and acidic residues) spans 66 to 80 (AQEREHPAKRLRLDI). Low complexity predominate over residues 99-108 (PKSTPVSTSS). A compositionally biased stretch (pro residues) spans 151 to 162 (LSPPSFPAPPWK). Over residues 1496 to 1512 (PSPAASGSTPAPTPSGS) the composition is skewed to low complexity.

This sequence belongs to the Mediator complex subunit 12 family. Component of the srb8-11 complex, which itself associates with the Mediator complex.

The protein resides in the nucleus. Functionally, component of the srb8-11 complex. The srb8-11 complex is a regulatory module of the Mediator complex which is itself involved in regulation of basal and activated RNA polymerase II-dependent transcription. The srb8-11 complex may be involved in the transcriptional repression of a subset of genes regulated by Mediator. It may inhibit the association of the Mediator complex with RNA polymerase II to form the holoenzyme complex. In Aspergillus clavatus (strain ATCC 1007 / CBS 513.65 / DSM 816 / NCTC 3887 / NRRL 1 / QM 1276 / 107), this protein is Mediator of RNA polymerase II transcription subunit 12 (srb8).